An 85-amino-acid polypeptide reads, in one-letter code: Beta-insect depressant toxin Lqh-dprIT3g (85 aa).

Positions 1-21 (MKLLLLLTISASMLIEGLVNA) are cleaved as a signal peptide. The LCN-type CS-alpha/beta domain occupies 22–82 (DGYIRGGDGC…EWDYETDTCG (61 aa)). 4 disulfide bridges follow: cysteine 31-cysteine 81, cysteine 35-cysteine 56, cysteine 42-cysteine 63, and cysteine 46-cysteine 65. Glycine amide is present on glycine 82.

The protein belongs to the long (4 C-C) scorpion toxin superfamily. Sodium channel inhibitor family. Beta subfamily. In terms of tissue distribution, expressed by the venom gland.

It is found in the secreted. Depressant insect beta-toxins cause a transient contraction paralysis followed by a slow flaccid paralysis. They bind voltage-independently at site-4 of sodium channels (Nav) and block action potentials, primarily by depolarizing the axonal membrane and suppressing the sodium current. This depressant toxin is active only on insects. It is found in a relatively small amount in the venom. In Leiurus hebraeus (Hebrew deathstalker scorpion), this protein is Beta-insect depressant toxin Lqh-dprIT3g.